A 364-amino-acid polypeptide reads, in one-letter code: Dual-specificity RNA methyltransferase RlmN (364 aa).

The Proton acceptor role is filled by glutamate 91. Residues glycine 102 to aspartate 337 form the Radical SAM core domain. A disulfide bridge links cysteine 109 with cysteine 342. Residues cysteine 116, cysteine 120, and cysteine 123 each coordinate [4Fe-4S] cluster. S-adenosyl-L-methionine is bound by residues glycine 169–glutamate 170, serine 201, serine 223–histidine 225, and asparagine 299. Cysteine 342 functions as the S-methylcysteine intermediate in the catalytic mechanism.

It belongs to the radical SAM superfamily. RlmN family. [4Fe-4S] cluster is required as a cofactor.

The protein resides in the cytoplasm. It carries out the reaction adenosine(2503) in 23S rRNA + 2 reduced [2Fe-2S]-[ferredoxin] + 2 S-adenosyl-L-methionine = 2-methyladenosine(2503) in 23S rRNA + 5'-deoxyadenosine + L-methionine + 2 oxidized [2Fe-2S]-[ferredoxin] + S-adenosyl-L-homocysteine. It catalyses the reaction adenosine(37) in tRNA + 2 reduced [2Fe-2S]-[ferredoxin] + 2 S-adenosyl-L-methionine = 2-methyladenosine(37) in tRNA + 5'-deoxyadenosine + L-methionine + 2 oxidized [2Fe-2S]-[ferredoxin] + S-adenosyl-L-homocysteine. In terms of biological role, specifically methylates position 2 of adenine 2503 in 23S rRNA and position 2 of adenine 37 in tRNAs. m2A2503 modification seems to play a crucial role in the proofreading step occurring at the peptidyl transferase center and thus would serve to optimize ribosomal fidelity. The sequence is that of Dual-specificity RNA methyltransferase RlmN from Nitratidesulfovibrio vulgaris (strain DP4) (Desulfovibrio vulgaris).